Consider the following 126-residue polypeptide: Small ribosomal subunit protein eS24 (126 aa).

Residues 98-126 (LYTKPQTSRKQRKEKKNRLKKAGKKTAKK) form a disordered region. Basic residues predominate over residues 104–126 (TSRKQRKEKKNRLKKAGKKTAKK).

Belongs to the eukaryotic ribosomal protein eS24 family.

The polypeptide is Small ribosomal subunit protein eS24 (rps24) (Dictyostelium discoideum (Social amoeba)).